A 99-amino-acid chain; its full sequence is ATP-dependent Clp protease adapter protein ClpS (99 aa).

Belongs to the ClpS family. As to quaternary structure, binds to the N-terminal domain of the chaperone ClpA.

In terms of biological role, involved in the modulation of the specificity of the ClpAP-mediated ATP-dependent protein degradation. The chain is ATP-dependent Clp protease adapter protein ClpS from Acetivibrio thermocellus (strain ATCC 27405 / DSM 1237 / JCM 9322 / NBRC 103400 / NCIMB 10682 / NRRL B-4536 / VPI 7372) (Clostridium thermocellum).